Here is a 914-residue protein sequence, read N- to C-terminus: Probable UDP-N-acetylglucosamine--peptide N-acetylglucosaminyltransferase SPINDLY (914 aa).

The disordered stretch occupies residues 1–39 (MVGLEDDTERERSPVVENGFSNGSRSSSSSAGVLSPSRK). Residues 19-37 (GFSNGSRSSSSSAGVLSPS) are compositionally biased toward low complexity. Ser35 carries the post-translational modification Phosphoserine. 11 TPR repeats span residues 43 to 76 (GNDT…DSKN), 77 to 110 (VEAH…DPHN), 112 to 144 (CALT…DASY), 152 to 185 (AIVL…DPHY), 186 to 219 (APAY…RPMY), 220 to 253 (AEAY…SPNF), 261 to 294 (AIAL…NWHY), 295 to 328 (ADAM…NPHC), 329 to 362 (AEAC…KPNF), 364 to 396 (QSLN…NPTY), and 397 to 430 (AEAF…DPDS). The interval 431 to 914 (RNAGQNRLLA…QLSKRMDSTS (484 aa)) is catalytic region. The tract at residues 866-914 (PLISKDLGPSRVSVTGEATPSLKANGSAPVPSSLPTQSPQLSKRMDSTS) is disordered. Positions 877 to 889 (VSVTGEATPSLKA) are enriched in polar residues. Low complexity predominate over residues 894–907 (PVPSSLPTQSPQLS).

Belongs to the glycosyltransferase 41 family. O-GlcNAc transferase subfamily. As to quaternary structure, homomultimer; via its TPR repeats. Interacts with GI. Interacts with TCP14 and TCP15. Interacts (via N-terminus) with APRR5. Interacts with CPN20. In terms of tissue distribution, widely expressed. Present throughout the plant (at protein level).

The protein localises to the cytoplasm. It is found in the nucleus. The catalysed reaction is L-seryl-[protein] + UDP-N-acetyl-alpha-D-glucosamine = 3-O-(N-acetyl-beta-D-glucosaminyl)-L-seryl-[protein] + UDP + H(+). The enzyme catalyses L-threonyl-[protein] + UDP-N-acetyl-alpha-D-glucosamine = 3-O-(N-acetyl-beta-D-glucosaminyl)-L-threonyl-[protein] + UDP + H(+). It carries out the reaction L-seryl-[protein] + GDP-beta-L-fucose = 3-O-(alpha-L-fucosyl)-L-seryl-[protein] + GDP + H(+). It catalyses the reaction L-threonyl-[protein] + GDP-beta-L-fucose = 3-O-(alpha-L-fucosyl)-L-threonyl-[protein] + GDP + H(+). It participates in protein modification; protein glycosylation. Probable O-linked N-acetylglucosamine transferase (OGT) involved in various processes such as gibberellin (GA) signaling pathway and circadian clock. OGTs catalyze the addition of nucleotide-activated sugars directly onto the polypeptide through O-glycosidic linkage with the hydroxyl of serine or threonine. Probably acts by adding O-linked sugars to yet unknown proteins. Acts as a repressor of GA signaling pathway to inhibit hypocotyl elongation. Functions with GIGANTEA (GI) in pathways controlling flowering, circadian cotyledon movements and hypocotyl elongation. Acts as a light-regulated promoter of elongation via its interaction with GI. Acts as an activator of cytokinin signaling. Required with SEC for gamete and seed development. Its OGT activity has been proved in vitro but not in vivo. Possesses O-fucosyltransferase activity on specific serine and threonine residues. Mediates O-fucosylation of the DELLA protein RGA, a repressor of the GA signaling pathway. O-fucosylation enhances RGA activity by promoting RGA binding to key transcription factors in brassinosteroid and light-signaling pathways. Regulates root hair patterning upstream of the transcription factor WER, independently of DELLA proteins and GA signaling. Involved in abscisic acid (ABA) signaling partly through functional ABAR. Mediates O-fucosylation of CPN20 that may depress ABA responses during seed germination and seedling development. Involved in the modulation of the pace of the circadian clock by mediating O-fucosylation of APRR5, one of the core circadian clock components. O-fucosylation promotes APRR5 proteolysis. The sequence is that of Probable UDP-N-acetylglucosamine--peptide N-acetylglucosaminyltransferase SPINDLY from Arabidopsis thaliana (Mouse-ear cress).